The sequence spans 467 residues: Syntaxin-5 (467 aa).

2 disordered regions span residues 1 to 53 and 58 to 77; these read MQTR…QSLV and GHEA…SIST. Topologically, residues 1 to 445 are cytoplasmic; sequence MQTRRRLHQT…KYFQSVSKNR (445 aa). Positions 10-22 are enriched in low complexity; it reads TDQQDYSSSSTYT. Over residues 29 to 45 the composition is skewed to gly residues; sequence GGAGAGSVGTGTAGGSV. The segment covering 68 to 77 has biased composition (polar residues); sequence NYQSGDSIST. Positions 245-269 form a coiled coil; sequence IKGDLNALNQQIARLQDISKDQRRH. A disordered region spans residues 310-335; sequence QQKTRRDQFSQGPGPLAAHTVSPSTA. In terms of domain architecture, t-SNARE coiled-coil homology spans 375 to 437; the sequence is DNYVQQRAET…EAAHGEILKY (63 aa). A helical; Anchor for type IV membrane protein membrane pass occupies residues 446–466; the sequence is WLMIKIFGVLIFFFLFFVVFM. S467 is a topological domain (vesicular).

This sequence belongs to the syntaxin family. Homodimer.

The protein localises to the golgi apparatus. It localises to the cis-Golgi network membrane. Its function is as follows. Mediates endoplasmic reticulum to Golgi transport. The sequence is that of Syntaxin-5 from Drosophila melanogaster (Fruit fly).